A 666-amino-acid chain; its full sequence is MASIFKIHSAYKPAGDQIKAIENIADSFQKGAEKVTLVGVTGSGKTFTMAQVIQNLGLPTLVLSHNKTLAAQLFREFKEFFPENAVEYFVSYYDYYQPEAYVPSSDTFIEKDSSINEEIDKLRLRATSSLLEREDVVIVSSVSCIYGLGSPEEYTNSVVALKTGDTIERDAVIRKLLHIQYNRNDIDFSRGNFRVRGDSIEIYPAYHTDGIRIEFFGDEIDSISRINPITAQTILKLEKTYIYPAKHFITSGPKVKVAIENIKAELEAQALFFRKNDKLLEAERIISRTNYDMEMLQEMGYCNGIENYSRHLTGRKAGERPACLIDYFQGEFLLIVDESHVTIPQIGGMFAGDKARKQTLVDFGFRLPSALDNRPLNFEEFETLTPKTLYVSATPADYEMEKSSKVVEQIIRPTGLLDPIVEVRSTKNQIEDLLVEIRKRIDVGERILITTLTKKMSEDLTDYYKEIGLQVAYLHSEVETLDRVAIIRDLRKGIYDVLIGINLLREGLDIPEVSLVAILDADKEGFLRNYKSLIQTVGRAARNVNGTAILYADKITDSMAKAIDETKRRRKIQEDHNLKFGITPLTIRKEVNDIIEREEKKRTSEDLVLEDVEKKFNSKKFPNKEVLKDKLREEMMKAAKELDFERAAILRDKMLSIQINDPSTEN.

Positions 26-183 constitute a Helicase ATP-binding domain; sequence DSFQKGAEKV…RKLLHIQYNR (158 aa). 39–46 is a binding site for ATP; it reads GVTGSGKT. The Beta-hairpin motif lies at 92-115; sequence YYDYYQPEAYVPSSDTFIEKDSSI. A Helicase C-terminal domain is found at 429–591; sequence QIEDLLVEIR…ITPLTIRKEV (163 aa). The 36-residue stretch at 625-660 folds into the UVR domain; that stretch reads EVLKDKLREEMMKAAKELDFERAAILRDKMLSIQIN.

This sequence belongs to the UvrB family. In terms of assembly, forms a heterotetramer with UvrA during the search for lesions. Interacts with UvrC in an incision complex.

The protein localises to the cytoplasm. Functionally, the UvrABC repair system catalyzes the recognition and processing of DNA lesions. A damage recognition complex composed of 2 UvrA and 2 UvrB subunits scans DNA for abnormalities. Upon binding of the UvrA(2)B(2) complex to a putative damaged site, the DNA wraps around one UvrB monomer. DNA wrap is dependent on ATP binding by UvrB and probably causes local melting of the DNA helix, facilitating insertion of UvrB beta-hairpin between the DNA strands. Then UvrB probes one DNA strand for the presence of a lesion. If a lesion is found the UvrA subunits dissociate and the UvrB-DNA preincision complex is formed. This complex is subsequently bound by UvrC and the second UvrB is released. If no lesion is found, the DNA wraps around the other UvrB subunit that will check the other stand for damage. In Leptospira borgpetersenii serovar Hardjo-bovis (strain JB197), this protein is UvrABC system protein B.